A 450-amino-acid polypeptide reads, in one-letter code: 3-keto-steroid reductase erg27 (450 aa).

NADP(+) contacts are provided by Leu-25, Thr-53, and Lys-59. Residues Ser-215 and Tyr-238 each act as proton donor in the active site. Residues Tyr-238, Lys-242, and Thr-296 each coordinate NADP(+). Lys-242 (lowers pKa of active site Tyr) is an active-site residue.

The protein belongs to the short-chain dehydrogenases/reductases (SDR) family. ERG27 subfamily. Heterotetramer of erg25, erg26, erg27 and erg28. Erg28 acts as a scaffold to tether erg27 and other 4,4-demethylation-related enzymes, forming a demethylation enzyme complex, in the endoplasmic reticulum.

It is found in the endoplasmic reticulum membrane. The protein localises to the lipid droplet. It functions in the pathway steroid metabolism; ergosterol biosynthesis. Its function is as follows. Sterol-C4-methyl oxidase; part of the third module of ergosterol biosynthesis pathway that includes the late steps of the pathway. Erg27 is a catalytic component of the C-4 demethylation complex that catalyzes the conversion of 4,4-dimethylfecosterol into fecosterol via 4-methylfecosterol. The third module or late pathway involves the ergosterol synthesis itself through consecutive reactions that mainly occur in the endoplasmic reticulum (ER) membrane. Firstly, the squalene synthase erg9 catalyzes the condensation of 2 farnesyl pyrophosphate moieties to form squalene, which is the precursor of all steroids. Squalene synthase is crucial for balancing the incorporation of farnesyl diphosphate (FPP) into sterol and nonsterol isoprene synthesis. Secondly, squalene is converted into lanosterol by the consecutive action of the squalene epoxidase erg1 and the lanosterol synthase erg7. Then, the delta(24)-sterol C-methyltransferase erg6 methylates lanosterol at C-24 to produce eburicol. Eburicol is the substrate of the sterol 14-alpha demethylase encoded by cyp51A and cyp51B, to yield 4,4,24-trimethyl ergosta-8,14,24(28)-trienol. The C-14 reductase erg24 then reduces the C14=C15 double bond which leads to 4,4-dimethylfecosterol. A sequence of further demethylations at C-4, involving the C-4 demethylation complex containing the C-4 methylsterol oxidases erg25A or erg25B, the sterol-4-alpha-carboxylate 3-dehydrogenase erg26 and the 3-keto-steroid reductase erg27, leads to the production of fecosterol via 4-methylfecosterol. The C-8 sterol isomerase erg2 then catalyzes the reaction which results in unsaturation at C-7 in the B ring of sterols and thus converts fecosterol to episterol. The sterol-C5-desaturase erg3B then catalyzes the introduction of a C-5 double bond in the B ring to produce 5-dehydroepisterol. The 2 other sterol-C5-desaturases, erg3A and erg3C, seem to be less important in ergosterol biosynthesis. The C-22 sterol desaturase erg5 further converts 5-dehydroepisterol into ergosta-5,7,22,24(28)-tetraen-3beta-ol by forming the C-22(23) double bond in the sterol side chain. Finally, ergosta-5,7,22,24(28)-tetraen-3beta-ol is substrate of the C-24(28) sterol reductases erg4A and erg4B to produce ergosterol. Possible alternative sterol biosynthetic pathways might exist from fecosterol to ergosterol, depending on the activities of the erg3 isoforms. In Aspergillus fumigatus (strain ATCC MYA-4609 / CBS 101355 / FGSC A1100 / Af293) (Neosartorya fumigata), this protein is 3-keto-steroid reductase erg27.